Reading from the N-terminus, the 237-residue chain is Small ribosomal subunit protein uS5 (237 aa).

The disordered stretch occupies residues 1 to 59; the sequence is MADETNLEGVAAVEATGGEPQREGRGRGRGRGGNDRGGERGGRGRRDDRRGRGNNDEEG. The segment covering 20 to 55 has biased composition (basic and acidic residues); that stretch reads PQREGRGRGRGRGGNDRGGERGGRGRRDDRRGRGNN. The region spanning 63-126 is the S5 DRBM domain; it reads LIEKLVHINR…AAAKRAMVRV (64 aa).

It belongs to the universal ribosomal protein uS5 family. In terms of assembly, part of the 30S ribosomal subunit. Contacts proteins S4 and S8.

Its function is as follows. With S4 and S12 plays an important role in translational accuracy. Functionally, located at the back of the 30S subunit body where it stabilizes the conformation of the head with respect to the body. This Novosphingobium aromaticivorans (strain ATCC 700278 / DSM 12444 / CCUG 56034 / CIP 105152 / NBRC 16084 / F199) protein is Small ribosomal subunit protein uS5.